Reading from the N-terminus, the 445-residue chain is Tubulin beta chain (445 aa).

GTP is bound by residues glutamine 11, glutamate 69, serine 138, glycine 142, threonine 143, glycine 144, asparagine 205, and asparagine 227. Glutamate 69 provides a ligand contact to Mg(2+).

Belongs to the tubulin family. Dimer of alpha and beta chains. A typical microtubule is a hollow water-filled tube with an outer diameter of 25 nm and an inner diameter of 15 nM. Alpha-beta heterodimers associate head-to-tail to form protofilaments running lengthwise along the microtubule wall with the beta-tubulin subunit facing the microtubule plus end conferring a structural polarity. Microtubules usually have 13 protofilaments but different protofilament numbers can be found in some organisms and specialized cells. Mg(2+) serves as cofactor.

Its subcellular location is the cytoplasm. The protein localises to the cytoskeleton. Tubulin is the major constituent of microtubules, a cylinder consisting of laterally associated linear protofilaments composed of alpha- and beta-tubulin heterodimers. Microtubules grow by the addition of GTP-tubulin dimers to the microtubule end, where a stabilizing cap forms. Below the cap, tubulin dimers are in GDP-bound state, owing to GTPase activity of alpha-tubulin. The polypeptide is Tubulin beta chain (TUB2) (Ajellomyces capsulatus (Darling's disease fungus)).